A 538-amino-acid chain; its full sequence is BTB/POZ domain-containing protein 6 (538 aa).

Positions 1–17 (MLLPLACLHGRVAQCLT) are cleaved as a signal peptide. Disordered regions lie at residues 29-53 (PRRGARARGAASTGAEAAPAAPPAK) and 76-115 (AAVGRKAGPRSPPSAPAPAPPPPAPAPPTLGNNHQESPGW). Residues 35 to 53 (ARGAASTGAEAAPAAPPAK) show a composition bias toward low complexity. Pro residues predominate over residues 85 to 103 (RSPPSAPAPAPPPPAPAPP). Residues 136-206 (ADVHFVVGPP…MYSDEIDLEA (71 aa)) enclose the BTB domain.

In terms of tissue distribution, expressed in lens.

The protein localises to the cytoplasm. Its function is as follows. Adapter protein for the cul3 E3 ubiquitin-protein ligase complex. Involved in late neuronal development and muscle formation. The polypeptide is BTB/POZ domain-containing protein 6 (Homo sapiens (Human)).